Consider the following 385-residue polypeptide: Neuropeptide Y receptor type 2 (385 aa).

Over 1–54 (MGPLEAIGEENQTDEMKMELFTKLYLPRYTTPVSELALDPKPELKDSTTLVEVQ) the chain is Extracellular. A glycan (N-linked (GlcNAc...) asparagine) is linked at Asn11. Residues 55 to 75 (IILIFAYCSIILLGVIGNSLV) form a helical membrane-spanning segment. The Cytoplasmic segment spans residues 76–90 (IHVIIKFKSMRTVTN). A helical transmembrane segment spans residues 91–111 (FFIANLAVADLLVNTLCLPFT). Topologically, residues 112–128 (LVYTLLGEWKLGPVLCH) are extracellular. Cysteines 127 and 207 form a disulfide. Residues 129 to 149 (LVPYAQALAVHVSTVTLTVIA) traverse the membrane as a helical segment. At 150–169 (LDRHRCIVYHLESKISKRIS) the chain is on the cytoplasmic side. Residues 170–190 (FLIIGVAWAVSALLASPLAIF) form a helical membrane-spanning segment. The Extracellular portion of the chain corresponds to 191–221 (REYSLIEIIPDFKIVVCSEKWPGEGQLNYGT). The chain crosses the membrane as a helical span at residues 222 to 242 (IYSVSMLLIQYVLPLAIISYA). Residues 243–273 (YTRIWTKLKNHVSPGAGNDHYHHRRQKTTKM) are Cytoplasmic-facing. A helical membrane pass occupies residues 274-294 (LVCVVVVFAVSWLPFHAFQLV). At 295–308 (SDIDSQVLDLKEYK) the chain is on the extracellular side. Residues 309 to 329 (LIYTVFHVIAMCSTFANPLLY) form a helical membrane-spanning segment. Residues 330-385 (GWMNNNYRTAFLTAFQCEQRLDSIHPEVSAAFKARKKLEAKKSQFPGDSFTQPTNV) are Cytoplasmic-facing. Cys346 is lipidated: S-palmitoyl cysteine.

This sequence belongs to the G-protein coupled receptor 1 family.

Its subcellular location is the cell membrane. In terms of biological role, receptor for neuropeptide Y and peptide YY. In Gallus gallus (Chicken), this protein is Neuropeptide Y receptor type 2 (NPY2R).